We begin with the raw amino-acid sequence, 440 residues long: Transposon Ty1-ML1 Gag polyprotein (440 aa).

Polar residues-rich tracts occupy residues 1-23 (MESQQLSNYPNISHGSACASVTS), 48-60 (TKANSQQTTTPAS), and 127-152 (QSQFPQYPSSVGTPLSTPSPESGNTF). 3 disordered regions span residues 1–88 (MESQ…YPQQ), 126–173 (PQSQ…RPPP), and 352–440 (GSRN…PETY). The segment covering 153–165 (TDSSSADSDMTST) has biased composition (low complexity). Residues 299 to 401 (NNGIHINNKV…NSKSKTARAH (103 aa)) are RNA-binding. The segment covering 402–418 (NVSTSNNSPSTDNDSIS) has biased composition (low complexity). The residue at position 416 (Ser416) is a Phosphoserine. The span at 419–428 (KSTTEPIQLN) shows a compositional bias: polar residues. Basic and acidic residues predominate over residues 429–440 (NKHDLHLRPETY).

In terms of assembly, homotrimer.

The protein localises to the cytoplasm. Functionally, capsid protein (CA) is the structural component of the virus-like particle (VLP), forming the shell that encapsulates the retrotransposons dimeric RNA genome. The particles are assembled from trimer-clustered units and there are holes in the capsid shells that allow for the diffusion of macromolecules. CA also has nucleocapsid-like chaperone activity, promoting primer tRNA(i)-Met annealing to the multipartite primer-binding site (PBS), dimerization of Ty1 RNA and initiation of reverse transcription. This is Transposon Ty1-ML1 Gag polyprotein (TY1A-ML1) from Saccharomyces cerevisiae (strain ATCC 204508 / S288c) (Baker's yeast).